Reading from the N-terminus, the 232-residue chain is uncharacterized protein (232 aa).

A coiled-coil region spans residues 89–140 (EFGTWQRRKNSLEDSLREVMKRRGELQDQLTAELGAIERMQTDLVGARQTLD).

This is an uncharacterized protein from Mycobacterium leprae (strain TN).